A 274-amino-acid chain; its full sequence is Putative phosphatase BUsg_029 (274 aa).

Residue Asp-8 is the Nucleophile of the active site. Asp-8 lines the Mg(2+) pocket. A phosphate-binding site is contributed by Leu-9. Mg(2+) is bound at residue Asp-10. Residues 42-43 (SG) and Lys-191 contribute to the phosphate site. Asp-214 contributes to the Mg(2+) binding site. Asn-217 provides a ligand contact to phosphate.

It belongs to the HAD-like hydrolase superfamily. Cof family. Mg(2+) is required as a cofactor.

This Buchnera aphidicola subsp. Schizaphis graminum (strain Sg) protein is Putative phosphatase BUsg_029.